A 661-amino-acid chain; its full sequence is SUMO-activating enzyme subunit 2 (661 aa).

ATP-binding positions include G29 to G34, D53, N61 to R64, K77, and D122 to R127. The Zn(2+) site is built by C163 and C166. Catalysis depends on C178, which acts as the Glycyl thioester intermediate. Residues C436 and C439 each contribute to the Zn(2+) site. The interval K545–D661 is disordered. Residues Q548–E563 show a composition bias toward basic and acidic residues. 2 stretches are compositionally biased toward low complexity: residues T577–N607 and S623–I634.

The protein belongs to the ubiquitin-activating E1 family. Heterodimer of sae1 and sae2. The complex binds sumo via sae2.

Its subcellular location is the nucleus. It participates in protein modification; protein sumoylation. Functionally, the dimeric enzyme acts as an E1 ligase for sumo. It mediates ATP-dependent activation of sumo and formation of a thioester with a conserved cysteine residue on sae2. The chain is SUMO-activating enzyme subunit 2 (uba2) from Dictyostelium discoideum (Social amoeba).